The primary structure comprises 295 residues: uncharacterized protein (295 aa).

Positions 1–19 (MRKLLLIITVFFTFNVAQA) are cleaved as a signal peptide.

This is an uncharacterized protein from Rickettsia conorii (strain ATCC VR-613 / Malish 7).